We begin with the raw amino-acid sequence, 437 residues long: Adenylosuccinate synthetase (437 aa).

GTP contacts are provided by residues 12 to 18 (GDEGKGK) and 40 to 42 (GHT). Asp-13 functions as the Proton acceptor in the catalytic mechanism. 2 residues coordinate Mg(2+): Asp-13 and Gly-40. Residues 13–16 (DEGK), 38–41 (NAGH), Thr-131, Arg-145, Gln-226, Thr-241, and Arg-305 contribute to the IMP site. The Proton donor role is filled by His-41. 301–307 (ATTGRRR) is a binding site for substrate. GTP contacts are provided by residues Arg-307, 333–335 (KLD), and 415–417 (SVG).

The protein belongs to the adenylosuccinate synthetase family. Homodimer. Mg(2+) serves as cofactor.

The protein localises to the cytoplasm. The catalysed reaction is IMP + L-aspartate + GTP = N(6)-(1,2-dicarboxyethyl)-AMP + GDP + phosphate + 2 H(+). It participates in purine metabolism; AMP biosynthesis via de novo pathway; AMP from IMP: step 1/2. In terms of biological role, plays an important role in the de novo pathway of purine nucleotide biosynthesis. Catalyzes the first committed step in the biosynthesis of AMP from IMP. This Desulfotalea psychrophila (strain LSv54 / DSM 12343) protein is Adenylosuccinate synthetase.